A 299-amino-acid polypeptide reads, in one-letter code: Cancer/testis antigen family 47 member B1 (299 aa).

Over residues 1-10 the composition is skewed to basic and acidic residues; the sequence is MSATGDRHPT. 2 disordered regions span residues 1-102 and 215-299; these read MSAT…EGNE and AREP…SKGT. Composition is skewed to low complexity over residues 20-31 and 46-60; these read QEGAQAEAAGAG and VPAA…PVEG. Positions 81–101 are enriched in acidic residues; that stretch reads AEEDSDIGPATEEEEEEEEGN. Positions 215 to 238 are enriched in basic and acidic residues; sequence AREPAEEAADEKPPEEAAEEKLTE. 2 stretches are compositionally biased toward acidic residues: residues 239 to 251 and 268 to 281; these read EATE…EPTS and WDEE…EEEK. Residues 270-298 adopt a coiled-coil conformation; that stretch reads EEAQDAAGEEEKEQEKEKDVENKVKNSKG. Residues 282-293 show a composition bias toward basic and acidic residues; the sequence is EQEKEKDVENKV.

Belongs to the CT47 family.

The polypeptide is Cancer/testis antigen family 47 member B1 (Homo sapiens (Human)).